The chain runs to 256 residues: MAENDSWDADDFEPEVSNQKGAVSGPPPAGRDRWEGEDEEEDVKDNWDDEEEAEAATKQEAQKTVEPKVSEKKKLLEKIREKEKLHKKRQEEVNQQEKEGTAPELSPEEQLAEKLRLKKLQEDSDLELAKEAFGDNVTVTGIDAMNPSSREDFTEFGKLLKEKITQYERSLFYPGFLEVLVREVCVSLEVDDLKKINNSLTVLCFEKQKQEKQQSKAKKKKKGVVPGGGLKANMKNDLEDYGGMDEGYGREYDDFM.

2 stretches are compositionally biased toward acidic residues: residues 1–14 (MAENDSWDADDFEP) and 35–54 (EGEDEEEDVKDNWDDEEEAE). 2 disordered regions span residues 1–109 (MAEN…SPEE) and 214–237 (QSKAKKKKKGVVPGGGLKANMKND). Residues 55–101 (AATKQEAQKTVEPKVSEKKKLLEKIREKEKLHKKRQEEVNQQEKEGT) show a composition bias toward basic and acidic residues. Residues 70–99 (SEKKKLLEKIREKEKLHKKRQEEVNQQEKE) are a coiled coil.

The protein belongs to the eIF-3 subunit J family. As to quaternary structure, component of the eukaryotic translation initiation factor 3 (eIF-3) complex, which is composed of 13 subunits: eif3a, eif3b, eif3c, eif3d, eif3e, eif3f, eif3g, eif3h, eif3i, eif3j, eif3k, eif3l and eif3m.

The protein resides in the cytoplasm. Functionally, component of the eukaryotic translation initiation factor 3 (eIF-3) complex, which is involved in protein synthesis of a specialized repertoire of mRNAs and, together with other initiation factors, stimulates binding of mRNA and methionyl-tRNAi to the 40S ribosome. The eIF-3 complex specifically targets and initiates translation of a subset of mRNAs involved in cell proliferation. The protein is Eukaryotic translation initiation factor 3 subunit J (eif3j) of Xenopus tropicalis (Western clawed frog).